A 163-amino-acid polypeptide reads, in one-letter code: Large ribosomal subunit protein uL11 (163 aa).

The tract at residues 1-26 (MAETIEVLVAGGQADPGPPLGPELGP) is disordered.

This sequence belongs to the universal ribosomal protein uL11 family. Part of the ribosomal stalk of the 50S ribosomal subunit. Interacts with L10 and the large rRNA to form the base of the stalk. L10 forms an elongated spine to which L12 dimers bind in a sequential fashion forming a multimeric L10(L12)X complex.

Forms part of the ribosomal stalk which helps the ribosome interact with GTP-bound translation factors. The polypeptide is Large ribosomal subunit protein uL11 (Halobacterium salinarum (strain ATCC 29341 / DSM 671 / R1)).